The primary structure comprises 352 residues: UDP-N-acetylglucosamine--N-acetylmuramyl-(pentapeptide) pyrophosphoryl-undecaprenol N-acetylglucosamine transferase (352 aa).

Residues 11 to 13 (TGG), asparagine 120, arginine 161, serine 188, and glutamine 286 each bind UDP-N-acetyl-alpha-D-glucosamine.

This sequence belongs to the glycosyltransferase 28 family. MurG subfamily.

The protein resides in the cell inner membrane. The catalysed reaction is di-trans,octa-cis-undecaprenyl diphospho-N-acetyl-alpha-D-muramoyl-L-alanyl-D-glutamyl-meso-2,6-diaminopimeloyl-D-alanyl-D-alanine + UDP-N-acetyl-alpha-D-glucosamine = di-trans,octa-cis-undecaprenyl diphospho-[N-acetyl-alpha-D-glucosaminyl-(1-&gt;4)]-N-acetyl-alpha-D-muramoyl-L-alanyl-D-glutamyl-meso-2,6-diaminopimeloyl-D-alanyl-D-alanine + UDP + H(+). Its pathway is cell wall biogenesis; peptidoglycan biosynthesis. In terms of biological role, cell wall formation. Catalyzes the transfer of a GlcNAc subunit on undecaprenyl-pyrophosphoryl-MurNAc-pentapeptide (lipid intermediate I) to form undecaprenyl-pyrophosphoryl-MurNAc-(pentapeptide)GlcNAc (lipid intermediate II). This Prochlorococcus marinus (strain NATL2A) protein is UDP-N-acetylglucosamine--N-acetylmuramyl-(pentapeptide) pyrophosphoryl-undecaprenol N-acetylglucosamine transferase.